Reading from the N-terminus, the 451-residue chain is ATP-dependent protease ATPase subunit HslU (451 aa).

Residues Ile26, 68–73, Asp263, Glu328, and Arg400 each bind ATP; that span reads GVGKTE.

It belongs to the ClpX chaperone family. HslU subfamily. A double ring-shaped homohexamer of HslV is capped on each side by a ring-shaped HslU homohexamer. The assembly of the HslU/HslV complex is dependent on binding of ATP.

It localises to the cytoplasm. Functionally, ATPase subunit of a proteasome-like degradation complex; this subunit has chaperone activity. The binding of ATP and its subsequent hydrolysis by HslU are essential for unfolding of protein substrates subsequently hydrolyzed by HslV. HslU recognizes the N-terminal part of its protein substrates and unfolds these before they are guided to HslV for hydrolysis. This is ATP-dependent protease ATPase subunit HslU from Dichelobacter nodosus (strain VCS1703A).